Consider the following 156-residue polypeptide: Small ribosomal subunit protein uS7 (156 aa).

This sequence belongs to the universal ribosomal protein uS7 family. As to quaternary structure, part of the 30S ribosomal subunit. Contacts proteins S9 and S11.

Its function is as follows. One of the primary rRNA binding proteins, it binds directly to 16S rRNA where it nucleates assembly of the head domain of the 30S subunit. Is located at the subunit interface close to the decoding center, probably blocks exit of the E-site tRNA. This Geobacillus kaustophilus (strain HTA426) protein is Small ribosomal subunit protein uS7.